The sequence spans 232 residues: Uracil-DNA glycosylase (232 aa).

The active-site Proton acceptor is D66.

The protein belongs to the uracil-DNA glycosylase (UDG) superfamily. UNG family.

It localises to the cytoplasm. It carries out the reaction Hydrolyzes single-stranded DNA or mismatched double-stranded DNA and polynucleotides, releasing free uracil.. In terms of biological role, excises uracil residues from the DNA which can arise as a result of misincorporation of dUMP residues by DNA polymerase or due to deamination of cytosine. The protein is Uracil-DNA glycosylase of Lactobacillus acidophilus (strain ATCC 700396 / NCK56 / N2 / NCFM).